The chain runs to 154 residues: Ribonuclease H (154 aa).

Positions 5-146 (EQNIVYLYCD…ADELANRGID (142 aa)) constitute an RNase H type-1 domain. Positions 14, 52, 74, and 138 each coordinate Mg(2+).

This sequence belongs to the RNase H family. As to quaternary structure, monomer. It depends on Mg(2+) as a cofactor.

The protein resides in the cytoplasm. The catalysed reaction is Endonucleolytic cleavage to 5'-phosphomonoester.. Endonuclease that specifically degrades the RNA of RNA-DNA hybrids. In Coxiella burnetii (strain CbuG_Q212) (Coxiella burnetii (strain Q212)), this protein is Ribonuclease H.